Reading from the N-terminus, the 836-residue chain is Serine/threonine-protein kinase ppk5 (836 aa).

Disordered regions lie at residues 1–29, 192–214, 230–307, and 328–381; these read MVGL…FLSP, INQL…TLSS, CSQF…YKSI, and TPLD…ERQN. Composition is skewed to polar residues over residues 192 to 205, 232 to 241, and 265 to 288; these read INQL…TNYP, QFASPRSSIV, and KPSN…TKLT. A compositionally biased stretch (basic and acidic residues) spans 289-298; the sequence is SQRDNDHQKD. Over residues 338 to 347 the composition is skewed to basic residues; that stretch reads SGKKFNKNSK. A compositionally biased stretch (low complexity) spans 353-362; sequence STISSYSSAS. In terms of domain architecture, Protein kinase spans 518–814; sequence YEIIDTVGKG…VDSALQHEFI (297 aa). Residues 524–532 and Lys547 contribute to the ATP site; that span reads VGKGSFGQV. Asp644 serves as the catalytic Proton acceptor. Tyr678 carries the phosphotyrosine modification.

It belongs to the protein kinase superfamily. CMGC Ser/Thr protein kinase family. MNB/DYRK subfamily.

It is found in the cytoplasm. The enzyme catalyses L-seryl-[protein] + ATP = O-phospho-L-seryl-[protein] + ADP + H(+). It carries out the reaction L-threonyl-[protein] + ATP = O-phospho-L-threonyl-[protein] + ADP + H(+). In terms of biological role, has a role in meiosis. This Schizosaccharomyces pombe (strain 972 / ATCC 24843) (Fission yeast) protein is Serine/threonine-protein kinase ppk5 (ppk5).